We begin with the raw amino-acid sequence, 445 residues long: UPF0210 protein SPP_0289 (445 aa).

The protein belongs to the UPF0210 family. As to quaternary structure, homodimer.

The chain is UPF0210 protein SPP_0289 from Streptococcus pneumoniae (strain P1031).